A 25-amino-acid polypeptide reads, in one-letter code: Galactose-binding lectin-2 (25 aa).

As to quaternary structure, homodimer. N-glycosylated.

Its function is as follows. D-galactose specific lectin. Binds in decreasing order of affinity: melibiose, N-acetyllactosamine, D-galacturonic acid, D-galactose, methyl-alpha-D-galactoside, D-galactose, methyl-alpha-D-galactopyranoside, methyl-beta-D-galactopyranoside and lactose. Binds also the glycoproteins globotriose, asialofetuin and mucin. Possesses glycan-dependent cytotoxic activity against Burkitt's lymphoma Raji cells and erythroleukemia K562 cells. Has calcium-independent hemagglutinating activity towards human erythrocytes. The protein is Galactose-binding lectin-2 of Aplysia kurodai (Kuroda's sea hare).